We begin with the raw amino-acid sequence, 225 residues long: Jeltraxin (225 aa).

An N-terminal signal peptide occupies residues methionine 1–alanine 19. The Pentraxin (PTX) domain maps to glycine 21–proline 223. Cysteine 51 and cysteine 112 are joined by a disulfide. Residues aspartate 75 and asparagine 76 each coordinate Ca(2+). N-linked (GlcNAc...) asparagine glycosylation occurs at asparagine 87. Ca(2+) is bound by residues glutamate 153, glutamine 154, aspartate 155, and glutamine 165. An N-linked (GlcNAc...) asparagine glycan is attached at asparagine 207.

In terms of assembly, homodecamer consisting of two homopentamer units. Pentraxin (or pentaxin) have a discoid arrangement of 5 non-covalently bound subunits. Ca(2+) is required as a cofactor. In terms of processing, glycosylated. Oviduct. Highest expression levels were detected in the pars convoluta with lower levels detected in the pars recta. No expression was detected in the pars uterina.

The protein localises to the secreted. Calcium-dependent beta-galactose specific lectin. In Lepidobatrachus laevis (Budgett's frog), this protein is Jeltraxin.